We begin with the raw amino-acid sequence, 95 residues long: Aspartyl/glutamyl-tRNA(Asn/Gln) amidotransferase subunit C (95 aa).

The protein belongs to the GatC family. Heterotrimer of A, B and C subunits.

The catalysed reaction is L-glutamyl-tRNA(Gln) + L-glutamine + ATP + H2O = L-glutaminyl-tRNA(Gln) + L-glutamate + ADP + phosphate + H(+). It catalyses the reaction L-aspartyl-tRNA(Asn) + L-glutamine + ATP + H2O = L-asparaginyl-tRNA(Asn) + L-glutamate + ADP + phosphate + 2 H(+). Functionally, allows the formation of correctly charged Asn-tRNA(Asn) or Gln-tRNA(Gln) through the transamidation of misacylated Asp-tRNA(Asn) or Glu-tRNA(Gln) in organisms which lack either or both of asparaginyl-tRNA or glutaminyl-tRNA synthetases. The reaction takes place in the presence of glutamine and ATP through an activated phospho-Asp-tRNA(Asn) or phospho-Glu-tRNA(Gln). This Chlorobaculum tepidum (strain ATCC 49652 / DSM 12025 / NBRC 103806 / TLS) (Chlorobium tepidum) protein is Aspartyl/glutamyl-tRNA(Asn/Gln) amidotransferase subunit C.